The sequence spans 680 residues: DNA ligase (680 aa).

NAD(+)-binding positions include 32–36, 81–82, and E115; these read DAVYD and SL. Catalysis depends on K117, which acts as the N6-AMP-lysine intermediate. Positions 138, 175, 291, and 315 each coordinate NAD(+). Zn(2+)-binding residues include C409, C412, C427, and C432. The region spanning 600 to 680 is the BRCT domain; that stretch reads ASEQHLKGLT…RLQAMLKDSP (81 aa).

This sequence belongs to the NAD-dependent DNA ligase family. LigA subfamily. Requires Mg(2+) as cofactor. Mn(2+) is required as a cofactor.

The enzyme catalyses NAD(+) + (deoxyribonucleotide)n-3'-hydroxyl + 5'-phospho-(deoxyribonucleotide)m = (deoxyribonucleotide)n+m + AMP + beta-nicotinamide D-nucleotide.. In terms of biological role, DNA ligase that catalyzes the formation of phosphodiester linkages between 5'-phosphoryl and 3'-hydroxyl groups in double-stranded DNA using NAD as a coenzyme and as the energy source for the reaction. It is essential for DNA replication and repair of damaged DNA. The chain is DNA ligase from Synechococcus sp. (strain CC9902).